Reading from the N-terminus, the 441-residue chain is Glutamyl-tRNA reductase (441 aa).

Substrate is bound by residues 49 to 52 (TCNR), Ser109, 114 to 116 (EDQ), and Gln120. The active-site Nucleophile is the Cys50. 190–195 (GAGKMS) is a binding site for NADP(+).

The protein belongs to the glutamyl-tRNA reductase family. As to quaternary structure, homodimer.

It carries out the reaction (S)-4-amino-5-oxopentanoate + tRNA(Glu) + NADP(+) = L-glutamyl-tRNA(Glu) + NADPH + H(+). The protein operates within porphyrin-containing compound metabolism; protoporphyrin-IX biosynthesis; 5-aminolevulinate from L-glutamyl-tRNA(Glu): step 1/2. Its function is as follows. Catalyzes the NADPH-dependent reduction of glutamyl-tRNA(Glu) to glutamate 1-semialdehyde (GSA). The polypeptide is Glutamyl-tRNA reductase (Moorella thermoacetica (strain ATCC 39073 / JCM 9320)).